The following is a 684-amino-acid chain: UvrABC system protein C (684 aa).

Residues 16–95 (TDPGVYKFRD…IKRFDPRFNV (80 aa)) form the GIY-YIG domain. One can recognise a UVR domain in the interval 208-243 (APVRKRVTQRMEEAAENLEFELAARLRDDLGAIDKL). Residues 332 to 352 (EAAEDAKLERRGVDQESHAEP) are compositionally biased toward basic and acidic residues. A disordered region spans residues 332–357 (EAAEDAKLERRGVDQESHAEPRQGNA).

Belongs to the UvrC family. As to quaternary structure, interacts with UvrB in an incision complex.

Its subcellular location is the cytoplasm. The UvrABC repair system catalyzes the recognition and processing of DNA lesions. UvrC both incises the 5' and 3' sides of the lesion. The N-terminal half is responsible for the 3' incision and the C-terminal half is responsible for the 5' incision. This Corynebacterium aurimucosum (strain ATCC 700975 / DSM 44827 / CIP 107346 / CN-1) (Corynebacterium nigricans) protein is UvrABC system protein C.